A 79-amino-acid polypeptide reads, in one-letter code: Small ribosomal subunit protein bS18 (79 aa).

The protein belongs to the bacterial ribosomal protein bS18 family. In terms of assembly, part of the 30S ribosomal subunit. Forms a tight heterodimer with protein bS6.

Its function is as follows. Binds as a heterodimer with protein bS6 to the central domain of the 16S rRNA, where it helps stabilize the platform of the 30S subunit. The chain is Small ribosomal subunit protein bS18 from Renibacterium salmoninarum (strain ATCC 33209 / DSM 20767 / JCM 11484 / NBRC 15589 / NCIMB 2235).